A 1708-amino-acid polypeptide reads, in one-letter code: Rapamycin-insensitive companion of mTOR (1708 aa).

An interaction with NBN region spans residues 1-789; it reads MAAIGRGRSL…DKANLHALIQ (789 aa). Phosphoserine occurs at positions 21, 35, and 265. A Glycyl lysine isopeptide (Lys-Gly) (interchain with G-Cter in ubiquitin) cross-link involves residue lysine 274. The interval 521–570 is ribosome-binding domain; the sequence is LKDTEEALLINLRDSQVLQHKENLEWNWNLIGTILKWPNVNLRNYKDEQL. ATP contacts are provided by asparagine 543, arginine 572, and arginine 576. The disordered stretch occupies residues 1022 to 1041; the sequence is LSLNSESTSSRHNSESESVP. Lysine 1092 and lysine 1095 each carry N6-acetyllysine. A Phosphothreonine modification is found at threonine 1103. Positions 1103–1134 are disordered; sequence TLPNKKHRSSSDPKGGKLSSESKTSNRRIRTL. Residues lysine 1116, lysine 1119, and lysine 1125 each carry the N6-acetyllysine modification. Position 1135 is a phosphothreonine; by RPS6KB1 (threonine 1135). Residues serine 1138, serine 1162, and serine 1219 each carry the phosphoserine modification. The tract at residues 1204-1252 is disordered; sequence VVESSTSSHMKIRSQSFNTDTTTSGISSMSSSPSRETVGVDATTMDTDC. Polar residues predominate over residues 1206-1221; that stretch reads ESSTSSHMKIRSQSFN. The span at 1222–1240 shows a compositional bias: low complexity; that stretch reads TDTTTSGISSMSSSPSRET. Serine 1235 is modified (phosphoserine; by GSK3-beta). Threonine 1271 bears the Phosphothreonine mark. 4 positions are modified to phosphoserine: serine 1274, serine 1278, serine 1282, and serine 1284. Over residues 1275–1288 the composition is skewed to low complexity; it reads NHLSLSKSNSVSLV. The interval 1275 to 1298 is disordered; that stretch reads NHLSLSKSNSVSLVPPGSSHTLPR. At threonine 1295 the chain carries Phosphothreonine. Serine 1302 and serine 1313 each carry phosphoserine. The residue at position 1332 (threonine 1332) is a Phosphothreonine. A phosphoserine mark is found at serine 1346 and serine 1353. Threonine 1376 is subject to Phosphothreonine. At serine 1385 the chain carries Phosphoserine. Residue tyrosine 1386 is modified to Phosphotyrosine. Serine 1388, serine 1396, and serine 1411 each carry phosphoserine. Positions 1515, 1520, and 1523 each coordinate Zn(2+). Serine 1571, serine 1574, serine 1577, and serine 1591 each carry phosphoserine. Cysteine 1651 provides a ligand contact to Zn(2+). Residue threonine 1695 is modified to Phosphothreonine; by GSK3-alpha and GSK3-beta.

It belongs to the RICTOR family. As to quaternary structure, component of the mechanistic target of rapamycin complex 2 (mTORC2), consisting in two heterotretramers composed of MTOR, MLST8, RICTOR and MAPKAP1/SIN1. The mTORC2 core complex associates with PRR5/PROTOR1 and/or PRR5L/PROTOR2. Contrary to mTORC1, mTORC2 does not bind to and is not sensitive to FKBP12-rapamycin. Binds directly to MTOR and PRR5 within the TORC2 complex; interaction with MTOR is enhanced by deubiquitination of RICTOR by USP9X. Interaction with MAPKAP1 is not enhanced by RICTOR deubiquitination by USP9X. Interacts with CCDC28B. Interacts with NBN. Interacts with SIK3. Interacts with NCKAP1L. Interacts with kinases GSK3A and GSK3B; the interactions lead to phosphorylation of RICTOR at Thr-1695 which facilitates its FBXW7-mediated ubiquitination and subsequent degradation. Interacts with FBXW7; the interaction is enhanced by GSK3-mediated phosphorylation of Thr-1695 and results in RICTOR ubiquitination and degradation. Interacts with ARMH4 (via cytoplasmic tail); this interaction bridges ARMH4 to the mTORC2 complex and inhibits the mTORC2 kinase activity. Interacts with UBXN2A. Interacts with TSPAN8. (Microbial infection) Interacts with vaccinia virus protein F17; this interaction dysregulates MTOR. Post-translationally, phosphorylated by MTOR; when part of mTORC2. Phosphorylated at Thr-1135 by RPS6KB1 downstream of the mTORC1 complex: phosphorylation of RICTOR inhibits mTORC2 signaling by creating a binding site for 14-3-3 proteins. Phosphorylated at Thr-1695 by GSK3A and GSK3B which facilitates RICTOR ubiquitination and subsequent degradation. Phosphorylated at Ser-1235 by GSK3B in response to endoplasmic stress, inhibiting mTORC2 signaling. Ubiquitinated by the SCF(FBXW7) complex, leading to its degradation by the proteasome. Deubiquitinated by USP9X; deubiquitination stabilizes RICTOR and enhances its binding to MTOR, thus promoting mTORC2 complex assembly. In terms of processing, acetylated by EP300/p300 in response to glucose, leading to activate the mTORC2 complex. Acetylation by BLOC1S1/GCN5L1 in response to hypotoxic stress protects RICTOR against ubiquitination and subsequent degradation by the proteasome.

The protein resides in the cell membrane. It localises to the endoplasmic reticulum membrane. The protein localises to the lysosome membrane. In terms of biological role, component of the mechanistic target of rapamycin complex 2 (mTORC2), which transduces signals from growth factors to pathways involved in proliferation, cytoskeletal organization, lipogenesis and anabolic output. In response to growth factors, mTORC2 phosphorylates and activates AGC protein kinase family members, including AKT (AKT1, AKT2 and AKT3), PKC (PRKCA, PRKCB and PRKCE) and SGK1. In contrast to mTORC1, mTORC2 is nutrient-insensitive. Within the mTORC2 complex, RICTOR probably acts as a molecular adapter. RICTOR is responsible for the FKBP12-rapamycin-insensitivity of mTORC2. mTORC2 plays a critical role in AKT1 activation by mediating phosphorylation of different sites depending on the context, such as 'Thr-450', 'Ser-473', 'Ser-477' or 'Thr-479', facilitating the phosphorylation of the activation loop of AKT1 on 'Thr-308' by PDPK1/PDK1 which is a prerequisite for full activation. mTORC2 catalyzes the phosphorylation of SGK1 at 'Ser-422' and of PRKCA on 'Ser-657'. The mTORC2 complex also phosphorylates various proteins involved in insulin signaling, such as FBXW8 and IGF2BP1. mTORC2 acts upstream of Rho GTPases to regulate the actin cytoskeleton, probably by activating one or more Rho-type guanine nucleotide exchange factors. mTORC2 promotes the serum-induced formation of stress-fibers or F-actin. The chain is Rapamycin-insensitive companion of mTOR from Homo sapiens (Human).